The following is a 240-amino-acid chain: Biosynthetic peptidoglycan transglycosylase (240 aa).

A helical membrane pass occupies residues 27–47; sequence VVLLFFFAVFALLLIFRFVPI.

The protein belongs to the glycosyltransferase 51 family.

Its subcellular location is the cell inner membrane. The catalysed reaction is [GlcNAc-(1-&gt;4)-Mur2Ac(oyl-L-Ala-gamma-D-Glu-L-Lys-D-Ala-D-Ala)](n)-di-trans,octa-cis-undecaprenyl diphosphate + beta-D-GlcNAc-(1-&gt;4)-Mur2Ac(oyl-L-Ala-gamma-D-Glu-L-Lys-D-Ala-D-Ala)-di-trans,octa-cis-undecaprenyl diphosphate = [GlcNAc-(1-&gt;4)-Mur2Ac(oyl-L-Ala-gamma-D-Glu-L-Lys-D-Ala-D-Ala)](n+1)-di-trans,octa-cis-undecaprenyl diphosphate + di-trans,octa-cis-undecaprenyl diphosphate + H(+). The protein operates within cell wall biogenesis; peptidoglycan biosynthesis. Peptidoglycan polymerase that catalyzes glycan chain elongation from lipid-linked precursors. In Haemophilus influenzae (strain PittEE), this protein is Biosynthetic peptidoglycan transglycosylase.